We begin with the raw amino-acid sequence, 1096 residues long: Pullulanase (1096 aa).

The signal sequence occupies residues 1–19 (MLRYTCHALFLGSLVLLSG). Cysteine 20 carries the N-palmitoyl cysteine lipid modification. The S-diacylglycerol cysteine moiety is linked to residue cysteine 20. Positions 24–34 (SSSSTSGSPGS) are enriched in low complexity. A disordered region spans residues 24–50 (SSSSTSGSPGSPGNPGNPGTPGTPDPQ). Aspartate 694 serves as the catalytic Nucleophile. Glutamate 723 functions as the Proton donor in the catalytic mechanism. Residues 1014-1044 (QAGRQSGQPCRRHRGGDQRRAGKPDAAGLRR) are disordered.

The protein belongs to the glycosyl hydrolase 13 family. In terms of assembly, homotrimer.

It is found in the cell membrane. The catalysed reaction is Hydrolysis of (1-&gt;6)-alpha-D-glucosidic linkages in pullulan, amylopectin and glycogen, and in the alpha- and beta-limit dextrins of amylopectin and glycogen.. This Klebsiella aerogenes (Enterobacter aerogenes) protein is Pullulanase (pulA).